The chain runs to 272 residues: NH(3)-dependent NAD(+) synthetase (272 aa).

Y33 contacts deamido-NAD(+). ATP contacts are provided by residues 45–52, R79, and Q85; that span reads GISGGQDS. Position 51 (D51) interacts with Mg(2+). A deamido-NAD(+)-binding site is contributed by R138. An ATP-binding site is contributed by T158. E163 lines the Mg(2+) pocket. 2 residues coordinate deamido-NAD(+): K171 and D178. K187 and T209 together coordinate ATP. Deamido-NAD(+)-binding positions include E224 and 258–259; that span reads HK.

This sequence belongs to the NAD synthetase family. In terms of assembly, homodimer. In terms of processing, phosphorylated during sporulation.

The catalysed reaction is deamido-NAD(+) + NH4(+) + ATP = AMP + diphosphate + NAD(+) + H(+). It participates in cofactor biosynthesis; NAD(+) biosynthesis; NAD(+) from deamido-NAD(+) (ammonia route): step 1/1. Functionally, catalyzes the ATP-dependent amidation of deamido-NAD to form NAD. Uses ammonia as a nitrogen source. The protein is NH(3)-dependent NAD(+) synthetase of Bacillus subtilis (strain 168).